The chain runs to 517 residues: Glutamate--cysteine ligase (517 aa).

The protein belongs to the glutamate--cysteine ligase type 1 family. Type 1 subfamily.

It catalyses the reaction L-cysteine + L-glutamate + ATP = gamma-L-glutamyl-L-cysteine + ADP + phosphate + H(+). The protein operates within sulfur metabolism; glutathione biosynthesis; glutathione from L-cysteine and L-glutamate: step 1/2. This is Glutamate--cysteine ligase from Pectobacterium atrosepticum (strain SCRI 1043 / ATCC BAA-672) (Erwinia carotovora subsp. atroseptica).